Reading from the N-terminus, the 518-residue chain is Bifunctional purine biosynthesis protein PurH (518 aa).

The MGS-like domain occupies 1–144 (MSKRALISVS…KNHAAVTVVC (144 aa)).

The protein belongs to the PurH family.

It carries out the reaction (6R)-10-formyltetrahydrofolate + 5-amino-1-(5-phospho-beta-D-ribosyl)imidazole-4-carboxamide = 5-formamido-1-(5-phospho-D-ribosyl)imidazole-4-carboxamide + (6S)-5,6,7,8-tetrahydrofolate. The catalysed reaction is IMP + H2O = 5-formamido-1-(5-phospho-D-ribosyl)imidazole-4-carboxamide. It functions in the pathway purine metabolism; IMP biosynthesis via de novo pathway; 5-formamido-1-(5-phospho-D-ribosyl)imidazole-4-carboxamide from 5-amino-1-(5-phospho-D-ribosyl)imidazole-4-carboxamide (10-formyl THF route): step 1/1. It participates in purine metabolism; IMP biosynthesis via de novo pathway; IMP from 5-formamido-1-(5-phospho-D-ribosyl)imidazole-4-carboxamide: step 1/1. This is Bifunctional purine biosynthesis protein PurH from Lactococcus lactis subsp. cremoris (strain MG1363).